The following is a 311-amino-acid chain: Aspartate carbamoyltransferase catalytic subunit (311 aa).

Carbamoyl phosphate is bound by residues R59 and T60. K87 contributes to the L-aspartate binding site. Carbamoyl phosphate contacts are provided by R109, H139, and Q142. L-aspartate is bound by residues R172 and R224. Carbamoyl phosphate contacts are provided by A265 and P266.

The protein belongs to the aspartate/ornithine carbamoyltransferase superfamily. ATCase family. As to quaternary structure, heterododecamer (2C3:3R2) of six catalytic PyrB chains organized as two trimers (C3), and six regulatory PyrI chains organized as three dimers (R2).

It catalyses the reaction carbamoyl phosphate + L-aspartate = N-carbamoyl-L-aspartate + phosphate + H(+). The protein operates within pyrimidine metabolism; UMP biosynthesis via de novo pathway; (S)-dihydroorotate from bicarbonate: step 2/3. Functionally, catalyzes the condensation of carbamoyl phosphate and aspartate to form carbamoyl aspartate and inorganic phosphate, the committed step in the de novo pyrimidine nucleotide biosynthesis pathway. The polypeptide is Aspartate carbamoyltransferase catalytic subunit (Streptococcus pyogenes serotype M18 (strain MGAS8232)).